Consider the following 310-residue polypeptide: Porphobilinogen deaminase (310 aa).

Residue cysteine 242 is modified to S-(dipyrrolylmethanemethyl)cysteine.

The protein belongs to the HMBS family. Monomer. Dipyrromethane serves as cofactor.

It carries out the reaction 4 porphobilinogen + H2O = hydroxymethylbilane + 4 NH4(+). Its pathway is porphyrin-containing compound metabolism; protoporphyrin-IX biosynthesis; coproporphyrinogen-III from 5-aminolevulinate: step 2/4. Tetrapolymerization of the monopyrrole PBG into the hydroxymethylbilane pre-uroporphyrinogen in several discrete steps. The sequence is that of Porphobilinogen deaminase from Psychromonas ingrahamii (strain DSM 17664 / CCUG 51855 / 37).